A 264-amino-acid chain; its full sequence is Thymidylate synthase (264 aa).

R21 contributes to the dUMP binding site. H51 contacts (6R)-5,10-methylene-5,6,7,8-tetrahydrofolate. DUMP is bound at residue 126-127 (RR). The active-site Nucleophile is C146. Residues 166–169 (RSCD), N177, and 207–209 (HLY) each bind dUMP. A (6R)-5,10-methylene-5,6,7,8-tetrahydrofolate-binding site is contributed by D169. Residue A263 participates in (6R)-5,10-methylene-5,6,7,8-tetrahydrofolate binding.

This sequence belongs to the thymidylate synthase family. Bacterial-type ThyA subfamily. In terms of assembly, homodimer.

The protein resides in the cytoplasm. The enzyme catalyses dUMP + (6R)-5,10-methylene-5,6,7,8-tetrahydrofolate = 7,8-dihydrofolate + dTMP. Its pathway is pyrimidine metabolism; dTTP biosynthesis. In terms of biological role, catalyzes the reductive methylation of 2'-deoxyuridine-5'-monophosphate (dUMP) to 2'-deoxythymidine-5'-monophosphate (dTMP) while utilizing 5,10-methylenetetrahydrofolate (mTHF) as the methyl donor and reductant in the reaction, yielding dihydrofolate (DHF) as a by-product. This enzymatic reaction provides an intracellular de novo source of dTMP, an essential precursor for DNA biosynthesis. The sequence is that of Thymidylate synthase from Shewanella denitrificans (strain OS217 / ATCC BAA-1090 / DSM 15013).